The primary structure comprises 451 residues: Penicillin-binding protein 4* (451 aa).

The active-site Acyl-ester intermediate is the serine 61.

This sequence belongs to the beta-lactamase family.

Its subcellular location is the forespore outer membrane. It participates in cell wall biogenesis; peptidoglycan biosynthesis. Probably involved in peptidoglycan modification during cortex synthesis. This chain is Penicillin-binding protein 4* (pbpE), found in Bacillus subtilis (strain 168).